Consider the following 507-residue polypeptide: ATP synthase subunit alpha, chloroplastic (507 aa).

170–177 is a binding site for ATP; sequence GDRQTGKT.

This sequence belongs to the ATPase alpha/beta chains family. In terms of assembly, F-type ATPases have 2 components, CF(1) - the catalytic core - and CF(0) - the membrane proton channel. CF(1) has five subunits: alpha(3), beta(3), gamma(1), delta(1), epsilon(1). CF(0) has four main subunits: a, b, b' and c.

Its subcellular location is the plastid. The protein resides in the chloroplast thylakoid membrane. It catalyses the reaction ATP + H2O + 4 H(+)(in) = ADP + phosphate + 5 H(+)(out). Its function is as follows. Produces ATP from ADP in the presence of a proton gradient across the membrane. The alpha chain is a regulatory subunit. This chain is ATP synthase subunit alpha, chloroplastic, found in Huperzia lucidula (Shining clubmoss).